We begin with the raw amino-acid sequence, 274 residues long: Large ribosomal subunit protein uL2 (274 aa).

Positions 214 to 274 (LGRRPRTRPV…NKYIVERRKK (61 aa)) are disordered.

The protein belongs to the universal ribosomal protein uL2 family. As to quaternary structure, part of the 50S ribosomal subunit. Forms a bridge to the 30S subunit in the 70S ribosome.

In terms of biological role, one of the primary rRNA binding proteins. Required for association of the 30S and 50S subunits to form the 70S ribosome, for tRNA binding and peptide bond formation. It has been suggested to have peptidyltransferase activity; this is somewhat controversial. Makes several contacts with the 16S rRNA in the 70S ribosome. The protein is Large ribosomal subunit protein uL2 of Flavobacterium johnsoniae (strain ATCC 17061 / DSM 2064 / JCM 8514 / BCRC 14874 / CCUG 350202 / NBRC 14942 / NCIMB 11054 / UW101) (Cytophaga johnsonae).